The following is a 33-amino-acid chain: Gastrin (33 aa).

Q1 carries the post-translational modification Pyrrolidone carboxylic acid. Y28 is modified (sulfotyrosine). F33 is modified (phenylalanine amide).

This sequence belongs to the gastrin/cholecystokinin family. Sulfation enhances proteolytic processing, and blocks peptide degradation. Levels of sulfation differ between proteolytically-cleaved gastrins and between tissues.

It localises to the secreted. In terms of biological role, gastrin stimulates the stomach mucosa to produce and secrete hydrochloric acid and the pancreas to secrete its digestive enzymes. It also stimulates smooth muscle contraction and increases blood circulation and water secretion in the stomach and intestine. The sequence is that of Gastrin (GAST) from Macropus giganteus (Eastern gray kangaroo).